A 333-amino-acid polypeptide reads, in one-letter code: MQLLKDKFGRVHDYIRISVTDRCNLRCVYCMPEEGLTFLPHEKVLSKDEIVSFMELMVQFGIKKVRITGGEPLLRTDIVEIVRGLGAIPEIEDISITTNAMYLAKKAEALKEAGLTRVNISLDSLHADRFQAITRGGRLQKVLDGIQKAEEVGLFPIKLNVVLIKGQNDDEITDFLKFTKDKDINIRFIEYMPIGHAGTSWKEKYLPLDTIFEACDAIGFEYEAVDSIRGNGPSENFRIKGAKGTFGVIHPVSSHFCDSCNRLRLTADGYIKACLYWDEEMNIRPFIHEPVKLMQLVQKAIDNKPENHEMALKLQDEVQSNKPTWRRMSQIGG.

A Radical SAM core domain is found at 7–221; the sequence is KFGRVHDYIR…FEACDAIGFE (215 aa). Residue Arg16 coordinates GTP. 2 residues coordinate [4Fe-4S] cluster: Cys23 and Cys27. Tyr29 is a binding site for S-adenosyl-L-methionine. Position 30 (Cys30) interacts with [4Fe-4S] cluster. Residue Arg66 coordinates GTP. Gly70 provides a ligand contact to S-adenosyl-L-methionine. Thr97 is a GTP binding site. Position 121 (Ser121) interacts with S-adenosyl-L-methionine. Lys158 lines the GTP pocket. S-adenosyl-L-methionine is bound at residue Met192. Residues Cys257 and Cys260 each coordinate [4Fe-4S] cluster. GTP is bound at residue 262-264; it reads RLR. [4Fe-4S] cluster is bound at residue Cys274.

Belongs to the radical SAM superfamily. MoaA family. As to quaternary structure, monomer and homodimer. [4Fe-4S] cluster serves as cofactor.

The enzyme catalyses GTP + AH2 + S-adenosyl-L-methionine = (8S)-3',8-cyclo-7,8-dihydroguanosine 5'-triphosphate + 5'-deoxyadenosine + L-methionine + A + H(+). The protein operates within cofactor biosynthesis; molybdopterin biosynthesis. Functionally, catalyzes the cyclization of GTP to (8S)-3',8-cyclo-7,8-dihydroguanosine 5'-triphosphate. The polypeptide is GTP 3',8-cyclase (Listeria welshimeri serovar 6b (strain ATCC 35897 / DSM 20650 / CCUG 15529 / CIP 8149 / NCTC 11857 / SLCC 5334 / V8)).